A 383-amino-acid chain; its full sequence is Probable cell wall hydrolase LytN (383 aa).

A signal peptide spans 1–49 (MFIYYCKECSIMNKQQSKVRYSIRKVSIGILSISIGMFLALGMSNKAYA). The 45-residue stretch at 175–219 (QIYTVKKGDTLSAIALKYKTTVSNIQNTNNIANPNLIFIGQKLKV) folds into the LysM domain. One can recognise a Peptidase C51 domain in the interval 241 to 378 (NSSTLNYLKT…NYENDMIFIR (138 aa)).

It is found in the secreted. Functionally, probably involved in peptidoglycan hydrolysis. This is Probable cell wall hydrolase LytN (lytN) from Staphylococcus aureus (strain Mu50 / ATCC 700699).